A 266-amino-acid polypeptide reads, in one-letter code: Integral membrane protein 2B (266 aa).

At 1–54 (MVKVTFNSALAQKEAKKDEPKSGEEALIIPPDAVAVDCKDPDDVVPVGQRRAWC) the chain is on the cytoplasmic side. A helical; Signal-anchor for type II membrane protein membrane pass occupies residues 55-75 (WCMCFGLAFMLAGVILGGAYL). At 76 to 266 (YKYFALQPDD…KFAVETLICS (191 aa)) the chain is on the lumenal side. Positions 102–134 (EPSADAPAALYQTIEENIKIFEEEEVEFISVPV) are necessary for interaction with APP and inhibitor effects on APP processing. Residues 137–231 (FADSDPANIV…LCHDKETYKL (95 aa)) enclose the BRICHOS domain. 2 disulfides stabilise this stretch: cysteine 164–cysteine 223 and cysteine 248–cysteine 265. N-linked (GlcNAc...) asparagine glycosylation is present at asparagine 170.

It belongs to the ITM2 family. In terms of assembly, homodimer; disulfide-linked. Interacts with SPPL2A and SPPL2B. Interacts with APP. Mature BRI2 (mBRI2) interacts with the APP amyloid-beta A4 protein; the interaction occurs at the cell surface and in the endocytic compartments and enable alpha- and beta-secretase-induced APP cleavage inhibition. Mature BRI2 (mBRI2) interacts with the APP C99; the interaction occurs in the endocytic compartments and enable gamma-secretase-induced C99 cleavage inhibition. May form heterodimers with Bri23 peptide and APP amyloid-beta protein 40. Interacts with ADAM7 in sperm; the interaction increases following capacitation. The ectodomain C-terminal part of the imBRI2 is processed by furin producing a secreted Bri23 peptide and a mature BRI2, membrane form (mBRI2). The remaining part of the ectodomain of mBRI2 containing the BRICHOS domain is cleaved by ADAM10 and is secreted (BRI2C, soluble form). The membrane-bound N-terminal fragment (BRI2C, membrane form) is further proteolytically processed by SPPL2A and SPPL2B through regulated intramembrane proteolysis producing a secreted C-peptide and a BRI2 intracellular domain (BRI2 ICD) released in the cytosol. Shedding by ADAM10 facilitates intramembrane cleavage but is not absolutely required for BRI2 ICD generation. Post-translationally, glycosylation at Asn-170 is important for cell surface localization, but doesn't affect furin- and ADAM10-induced proteolytic processing. Ubiquitous. Expressed in brain.

Its subcellular location is the golgi apparatus membrane. It is found in the cell membrane. The protein localises to the endosome membrane. It localises to the secreted. Plays a regulatory role in the processing of the amyloid-beta A4 precursor protein (APP) and acts as an inhibitor of the amyloid-beta peptide aggregation and fibrils deposition. Plays a role in the induction of neurite outgrowth. Functions as a protease inhibitor by blocking access of secretases to APP cleavage sites. Its function is as follows. Mature BRI2 (mBRI2) functions as a modulator of the amyloid-beta A4 precursor protein (APP) processing leading to a strong reduction in the secretion of secretase-processed amyloid-beta protein 40 and amyloid-beta protein 42. Functionally, bri23 peptide prevents aggregation of APP amyloid-beta protein 42 into toxic oligomers. In Homo sapiens (Human), this protein is Integral membrane protein 2B (ITM2B).